Consider the following 105-residue polypeptide: Urease subunit beta (105 aa).

This sequence belongs to the urease beta subunit family. In terms of assembly, heterotrimer of UreA (gamma), UreB (beta) and UreC (alpha) subunits. Three heterotrimers associate to form the active enzyme.

Its subcellular location is the cytoplasm. It carries out the reaction urea + 2 H2O + H(+) = hydrogencarbonate + 2 NH4(+). Its pathway is nitrogen metabolism; urea degradation; CO(2) and NH(3) from urea (urease route): step 1/1. The sequence is that of Urease subunit beta from Pseudomonas entomophila (strain L48).